We begin with the raw amino-acid sequence, 397 residues long: RNA polymerase II elongation factor ELL3 (397 aa).

Disordered regions lie at residues 164–219 (VSDP…KRSV) and 237–284 (VPSP…PEDI). A compositionally biased stretch (polar residues) spans 168–178 (LASNQGQSLPG). Acidic residues predominate over residues 250 to 262 (QEGEDWEQEDEDM). Over residues 269–281 (SSSVQEDSESPSP) the composition is skewed to low complexity. In terms of domain architecture, OCEL spans 285–395 (PDYLLQYRAI…LILEFEEKNR (111 aa)).

Belongs to the ELL/occludin family. In terms of assembly, interacts with AFF4. Component of the super elongation complex (SEC), at least composed of EAF1, EAF2, CDK9, MLLT3/AF9, AFF (AFF1 or AFF4), the P-TEFb complex and ELL (ELL, ELL2 or ELL3). Component of the little elongation complex (LEC), at least composed of ELL (ELL, ELL2 or ELL3), ZC3H8, ICE1 and ICE2. Testis specific.

Its subcellular location is the nucleus. In terms of biological role, enhancer-binding elongation factor that specifically binds enhancers in embryonic stem cells (ES cells), marks them, and is required for their future activation during stem cell specification. Does not only bind to enhancer regions of active genes, but also marks the enhancers that are in a poised or inactive state in ES cells and is required for establishing proper RNA polymerase II occupancy at developmentally regulated genes in a cohesin-dependent manner. Probably required for priming developmentally regulated genes for later recruitment of the super elongation complex (SEC), for transcriptional activation during differentiation. Required for recruitment of P-TEFb within SEC during differentiation. Probably preloaded on germ cell chromatin, suggesting that it may prime gene activation by marking enhancers as early as in the germ cells. Promoting epithelial-mesenchymal transition (EMT). Elongation factor component of the super elongation complex (SEC), a complex required to increase the catalytic rate of RNA polymerase II transcription by suppressing transient pausing by the polymerase at multiple sites along the DNA. Component of the little elongation complex (LEC), a complex required to regulate small nuclear RNA (snRNA) gene transcription by RNA polymerase II and III. The polypeptide is RNA polymerase II elongation factor ELL3 (ELL3) (Homo sapiens (Human)).